Consider the following 878-residue polypeptide: Alanine--tRNA ligase (878 aa).

The Zn(2+) site is built by His567, His571, Cys669, and His673. A disordered region spans residues 841-860; sequence AVGGKGGGRPDMAEAGGKDP.

It belongs to the class-II aminoacyl-tRNA synthetase family. Zn(2+) is required as a cofactor.

It localises to the cytoplasm. It catalyses the reaction tRNA(Ala) + L-alanine + ATP = L-alanyl-tRNA(Ala) + AMP + diphosphate. Functionally, catalyzes the attachment of alanine to tRNA(Ala) in a two-step reaction: alanine is first activated by ATP to form Ala-AMP and then transferred to the acceptor end of tRNA(Ala). Also edits incorrectly charged Ser-tRNA(Ala) and Gly-tRNA(Ala) via its editing domain. The chain is Alanine--tRNA ligase from Solibacter usitatus (strain Ellin6076).